A 216-amino-acid polypeptide reads, in one-letter code: Ras-related protein Rab-11A (216 aa).

G2 bears the N-acetylglycine mark. Positions 20, 21, 22, 23, 24, 25, 26, 37, 38, 40, 42, and 43 each coordinate GTP. S25 contacts Mg(2+). A Switch 1 motif is present at residues 36 to 47; that stretch reads FNLESKSTIGVE. Residues T43 and D66 each coordinate Mg(2+). The short motif at 67–86 is the Switch 2 element; that stretch reads TAGQERYRAITSAYYRGAVG. Residues G69, N124, K125, D127, A155, and L156 each coordinate GTP. The interval 183–211 is disordered; sequence DRRENDMSPSNNVVPIHVPPTTENKPKVQ. S-geranylgeranyl cysteine attachment occurs at residues C212 and C213. C213 is subject to Cysteine methyl ester. The propeptide at 214-216 is removed in mature form; sequence QNI.

Belongs to the small GTPase superfamily. Rab family. Interacts (GTP-bound form) with RAB11FIPs (via their C-termini) including RAB11FIP1, RAB11FIP2, RAB11FIP3, RAB11FIP4 and RAB11FIP5 effectors. Forms a complex with RAB11FIP3 and dynein intermediate chain DYNC1LI1; the interaction between RAB11A1 and RAB11FIP3 is direct; the complex regulates endocytic trafficking. Interacts with EVI5; EVI5 and RAB11FIP3 may be mutually exclusive and compete for binding RAB11A. Interacts with SGSM1, SGSM2, SGSM3 and VIPAS39. Interacts with EXOC6 in a GTP-dependent manner. Interacts with RAB11FIP5. Interacts with STXBP6. Interacts (GDP-bound form) with ZFYVE27. Interacts with BIRC6/bruce. May interact with TBC1D14. Interacts with UNC119; in a cell cycle-dependent manner. GDP-bound and nucleotide-free forms interact with SH3BP5. Interacts (GDP-bound form) with KIF5A in a ZFYVE27-dependent manner. Interacts (GDP-bound form) with RELCH. Found in a complex composed of RELCH, OSBP1 and RAB11A. Interacts with TBC1D12. Interacts with DEF6. Interacts with ATP9A. Forms a heterotetramer with RAB11FIP3; the GTP-bound form is preferred for binding. Forms a complex with Rabin8/RAB3IP and RAB11FIP3, probably a heterohexamer with two of each protein subunit, where Rabin8/RAB3IP and RAB11FIP3 simultaneously bind to RAB11A; the complex promotes preciliary trafficking and cilia growth. Forms a complex containing RAB11A, ASAP1, Rabin8/RAB3IP, RAP11FIP3 and ARF4; the complex promotes preciliary trafficking; the complex binds to RHO in photoreceptor cells and promotes RHO ciliary transport. Interacts (GTP-bound form) with WDR44; the interaction prevents RAB11A-RAB3IP-RAB11FIP3 complex formation. Mg(2+) serves as cofactor. As to expression, detected in various tissues, such as brain, testis, spleen, and heart.

It localises to the cell membrane. The protein localises to the endosome membrane. Its subcellular location is the recycling endosome membrane. It is found in the cleavage furrow. The protein resides in the cytoplasmic vesicle. It localises to the phagosome. The protein localises to the cytoplasmic vesicle membrane. Its subcellular location is the golgi apparatus. It is found in the trans-Golgi network. It carries out the reaction GTP + H2O = GDP + phosphate + H(+). Regulated by guanine nucleotide exchange factors (GEFs) which promote the exchange of bound GDP for free GTP. Regulated by GTPase activating proteins (GAPs) which increase the GTP hydrolysis activity. Inhibited by GDP dissociation inhibitors (GDIs) which prevent Rab-GDP dissociation. The small GTPases Rab are key regulators of intracellular membrane trafficking, from the formation of transport vesicles to their fusion with membranes. Rabs cycle between an inactive GDP-bound form and an active GTP-bound form that is able to recruit to membranes different set of downstream effectors directly responsible for vesicle formation, movement, tethering and fusion. The small Rab GTPase RAB11A regulates endocytic recycling. Forms a functional Rab11/RAB11FIP3/dynein complex that regulates the movement of peripheral sorting endosomes (SE) along microtubule tracks toward the microtubule organizing center/centrosome, generating the endosomal recycling compartment (ERC). Acts as a major regulator of membrane delivery during cytokinesis. Together with MYO5B and RAB8A participates in epithelial cell polarization. Together with Rabin8/RAB3IP, RAB8A, the exocyst complex, PARD3, PRKCI, ANXA2, CDC42 and DNMBP promotes transcytosis of PODXL to the apical membrane initiation sites (AMIS), apical surface formation and lumenogenesis. Together with MYO5B participates in CFTR trafficking to the plasma membrane and TF (Transferrin) recycling in nonpolarized cells. Required in a complex with MYO5B and RAB11FIP2 for the transport of NPC1L1 to the plasma membrane. Participates in the sorting and basolateral transport of CDH1 from the Golgi apparatus to the plasma membrane. Regulates the recycling of FCGRT (receptor of Fc region of monomeric IgG) to basolateral membranes. May also play a role in melanosome transport and release from melanocytes. Promotes Rabin8/RAB3IP preciliary vesicular trafficking to mother centriole by forming a ciliary targeting complex containing Rab11, ASAP1, Rabin8/RAB3IP, RAB11FIP3 and ARF4, thereby regulating ciliogenesis initiation. On the contrary, upon LPAR1 receptor signaling pathway activation, interaction with phosphorylated WDR44 prevents Rab11-RAB3IP-RAB11FIP3 complex formation and cilia growth. Participates in the export of a subset of neosynthesized proteins through a Rab8-Rab10-Rab11-endososomal dependent export route via interaction with WDR44. The sequence is that of Ras-related protein Rab-11A from Rattus norvegicus (Rat).